Consider the following 124-residue polypeptide: 5-hydroxyisourate hydrolase (124 aa).

The substrate site is built by His15, Arg53, and Tyr121.

This sequence belongs to the transthyretin family. 5-hydroxyisourate hydrolase subfamily. As to quaternary structure, homotetramer.

The enzyme catalyses 5-hydroxyisourate + H2O = 5-hydroxy-2-oxo-4-ureido-2,5-dihydro-1H-imidazole-5-carboxylate + H(+). Catalyzes the hydrolysis of 5-hydroxyisourate (HIU) to 2-oxo-4-hydroxy-4-carboxy-5-ureidoimidazoline (OHCU). In Mesorhizobium japonicum (strain LMG 29417 / CECT 9101 / MAFF 303099) (Mesorhizobium loti (strain MAFF 303099)), this protein is 5-hydroxyisourate hydrolase.